Consider the following 310-residue polypeptide: HTH-type transcriptional regulator PunR (310 aa).

Residues 2–59 (WSEYSLEVVDAVARNGSFSAAAQELHRVPSAVSYTVRQLEEWLAVPLFERRHRDVELT) form the HTH lysR-type domain. The segment at residues 19–38 (FSAAAQELHRVPSAVSYTVR) is a DNA-binding region (H-T-H motif).

This sequence belongs to the LysR transcriptional regulatory family.

Its subcellular location is the cytoplasm. Functionally, transcriptional regulator that activates the expression of punC, which encodes a purine nucleoside transporter. The polypeptide is HTH-type transcriptional regulator PunR (Escherichia coli O157:H7).